The sequence spans 164 residues: Endoribonuclease YbeY (164 aa).

Zn(2+) is bound by residues His124, His128, and His134.

The protein belongs to the endoribonuclease YbeY family. Zn(2+) serves as cofactor.

The protein localises to the cytoplasm. In terms of biological role, single strand-specific metallo-endoribonuclease involved in late-stage 70S ribosome quality control and in maturation of the 3' terminus of the 16S rRNA. This is Endoribonuclease YbeY from Nitrosomonas europaea (strain ATCC 19718 / CIP 103999 / KCTC 2705 / NBRC 14298).